Here is a 208-residue protein sequence, read N- to C-terminus: Small ribosomal subunit protein uS4 (208 aa).

Residues 30–51 (KSSLEKRPYAPGQHGQRRSKIS) form a disordered region. An S4 RNA-binding domain is found at 98–161 (RRLDNVVYRM…KNNPQVQRSI (64 aa)).

Belongs to the universal ribosomal protein uS4 family. Part of the 30S ribosomal subunit. Contacts protein S5. The interaction surface between S4 and S5 is involved in control of translational fidelity.

Its function is as follows. One of the primary rRNA binding proteins, it binds directly to 16S rRNA where it nucleates assembly of the body of the 30S subunit. With S5 and S12 plays an important role in translational accuracy. This Wolinella succinogenes (strain ATCC 29543 / DSM 1740 / CCUG 13145 / JCM 31913 / LMG 7466 / NCTC 11488 / FDC 602W) (Vibrio succinogenes) protein is Small ribosomal subunit protein uS4.